The sequence spans 272 residues: Putative phosphoenolpyruvate synthase regulatory protein (272 aa).

152–159 (GVSRSGKT) contributes to the ADP binding site.

It belongs to the pyruvate, phosphate/water dikinase regulatory protein family. PSRP subfamily.

It catalyses the reaction [pyruvate, water dikinase] + ADP = [pyruvate, water dikinase]-phosphate + AMP + H(+). It carries out the reaction [pyruvate, water dikinase]-phosphate + phosphate + H(+) = [pyruvate, water dikinase] + diphosphate. Its function is as follows. Bifunctional serine/threonine kinase and phosphorylase involved in the regulation of the phosphoenolpyruvate synthase (PEPS) by catalyzing its phosphorylation/dephosphorylation. The protein is Putative phosphoenolpyruvate synthase regulatory protein of Alcanivorax borkumensis (strain ATCC 700651 / DSM 11573 / NCIMB 13689 / SK2).